We begin with the raw amino-acid sequence, 407 residues long: uncharacterized protein (407 aa).

The protein belongs to the peptidase U32 family.

This is an uncharacterized protein from Methanocaldococcus jannaschii (strain ATCC 43067 / DSM 2661 / JAL-1 / JCM 10045 / NBRC 100440) (Methanococcus jannaschii).